The chain runs to 108 residues: UPF0102 protein Sama_3355 (108 aa).

Belongs to the UPF0102 family.

This chain is UPF0102 protein Sama_3355, found in Shewanella amazonensis (strain ATCC BAA-1098 / SB2B).